The chain runs to 450 residues: tRNA modification GTPase MnmE (450 aa).

(6S)-5-formyl-5,6,7,8-tetrahydrofolate contacts are provided by R21, E80, and K119. The region spanning G213–K373 is the TrmE-type G domain. Residue N223 participates in K(+) binding. GTP-binding positions include N223–T228, T242–T248, and D267–G270. Position 227 (S227) interacts with Mg(2+). Positions 242, 244, and 247 each coordinate K(+). A Mg(2+)-binding site is contributed by T248. K450 serves as a coordination point for (6S)-5-formyl-5,6,7,8-tetrahydrofolate.

Belongs to the TRAFAC class TrmE-Era-EngA-EngB-Septin-like GTPase superfamily. TrmE GTPase family. In terms of assembly, homodimer. Heterotetramer of two MnmE and two MnmG subunits. Requires K(+) as cofactor.

Its subcellular location is the cytoplasm. Functionally, exhibits a very high intrinsic GTPase hydrolysis rate. Involved in the addition of a carboxymethylaminomethyl (cmnm) group at the wobble position (U34) of certain tRNAs, forming tRNA-cmnm(5)s(2)U34. This chain is tRNA modification GTPase MnmE, found in Pseudothermotoga lettingae (strain ATCC BAA-301 / DSM 14385 / NBRC 107922 / TMO) (Thermotoga lettingae).